Here is a 694-residue protein sequence, read N- to C-terminus: Polyphosphate kinase (694 aa).

Asn45 contacts ATP. Mg(2+) is bound by residues Arg367 and Arg397. His427 acts as the Phosphohistidine intermediate in catalysis. The ATP site is built by Tyr460, Arg553, and His580.

Belongs to the polyphosphate kinase 1 (PPK1) family. The cofactor is Mg(2+). An intermediate of this reaction is the autophosphorylated ppk in which a phosphate is covalently linked to a histidine residue through a N-P bond.

The catalysed reaction is [phosphate](n) + ATP = [phosphate](n+1) + ADP. Functionally, catalyzes the reversible transfer of the terminal phosphate of ATP to form a long-chain polyphosphate (polyP). This is Polyphosphate kinase from Campylobacter jejuni subsp. doylei (strain ATCC BAA-1458 / RM4099 / 269.97).